The chain runs to 375 residues: Actin-binding Rho-activating protein (375 aa).

2 stretches are compositionally biased toward basic and acidic residues: residues 1–11 (MAPGEREREAG) and 79–99 (KPDRDGEGQHSEEATEVSHIK). Disordered stretches follow at residues 1-20 (MAPGEREREAGPAKSALRKV) and 38-99 (NENS…SHIK). A phosphoserine mark is found at Ser150 and Ser182. Residues 173 to 182 (QEEPTWKSDS) show a composition bias toward basic and acidic residues. The tract at residues 173 to 204 (QEEPTWKSDSVDTEDSGYGGDMEERPEQDAAP) is disordered. Actin-binding regions lie at residues 193-293 (DMEE…AERA) and 294-375 (KRAE…TLLE). 2 interaction with actin regions span residues 234 to 279 (SQVD…GDEG) and 346 to 375 (MRARKHGLVHFEGEMLWQGRDDHVVITLLE).

As to quaternary structure, binds F-actin and ABLIM1, ABLIM2 and ABLIM3. Interaction with ABLIM2 and ABLIM3 enhances activity. In terms of tissue distribution, expressed specifically in heart and skeletal muscle.

It localises to the cytoplasm. Its subcellular location is the myofibril. The protein resides in the sarcomere. It is found in the cytoskeleton. Functionally, acts as an activator of serum response factor (SRF)-dependent transcription possibly by inducing nuclear translocation of MKL1 or MKL2 and through a mechanism requiring Rho-actin signaling. The sequence is that of Actin-binding Rho-activating protein from Mus musculus (Mouse).